The following is a 506-amino-acid chain: Aerotaxis receptor (506 aa).

Over 1–166 (MSSHPYVTQQ…PSLPLRWRAR (166 aa)) the chain is Cytoplasmic. The chain crosses the membrane as a helical span at residues 167–186 (GVMTLMFILLAAMLWFVAAP). Residues 187-190 (VVTY) are Periplasmic-facing. Residues 191 to 209 (ILCALVVLLASACFEWQIV) form a helical membrane-spanning segment. At 210–506 (RPIENVAHQA…RLEDAVTVLH (297 aa)) the chain is on the cytoplasmic side. Residues 263-492 (QVSSVRNGSE…ESAQVSAMVK (230 aa)) enclose the Methyl-accepting transducer domain.

Belongs to the methyl-accepting chemotaxis (MCP) protein family.

Its subcellular location is the cell inner membrane. Signal transducer for aerotaxis. The aerotactic response is the accumulation of cells around air bubbles. The nature of the sensory stimulus detected by this protein is the proton motive force or cellular redox state. It uses a FAD prosthetic group as a redox sensor to monitor oxygen levels. This Escherichia coli (strain K12) protein is Aerotaxis receptor (aer).